The following is a 354-amino-acid chain: Carbamoyl phosphate synthase small chain (354 aa).

The interval 1–167 is CPSase; sequence MEAVLILEDG…KEPKIHKTAN (167 aa). The L-glutamine site is built by Ser-45, Gly-219, and Gly-221. Residues 171 to 354 enclose the Glutamine amidotransferase type-1 domain; that stretch reads RCVLIDCGVK…DEMIKLKDRK (184 aa). Cys-246 acts as the Nucleophile in catalysis. Residues Leu-247, Gln-250, Asn-288, Gly-290, and Phe-291 each contribute to the L-glutamine site. Catalysis depends on residues His-330 and Glu-332.

The protein belongs to the CarA family. In terms of assembly, composed of two chains; the small (or glutamine) chain promotes the hydrolysis of glutamine to ammonia, which is used by the large (or ammonia) chain to synthesize carbamoyl phosphate. Tetramer of heterodimers (alpha,beta)4.

It catalyses the reaction hydrogencarbonate + L-glutamine + 2 ATP + H2O = carbamoyl phosphate + L-glutamate + 2 ADP + phosphate + 2 H(+). It carries out the reaction L-glutamine + H2O = L-glutamate + NH4(+). It participates in amino-acid biosynthesis; L-arginine biosynthesis; carbamoyl phosphate from bicarbonate: step 1/1. The protein operates within pyrimidine metabolism; UMP biosynthesis via de novo pathway; (S)-dihydroorotate from bicarbonate: step 1/3. Its function is as follows. Small subunit of the glutamine-dependent carbamoyl phosphate synthetase (CPSase). CPSase catalyzes the formation of carbamoyl phosphate from the ammonia moiety of glutamine, carbonate, and phosphate donated by ATP, constituting the first step of 2 biosynthetic pathways, one leading to arginine and/or urea and the other to pyrimidine nucleotides. The small subunit (glutamine amidotransferase) binds and cleaves glutamine to supply the large subunit with the substrate ammonia. The polypeptide is Carbamoyl phosphate synthase small chain (Methanocaldococcus jannaschii (strain ATCC 43067 / DSM 2661 / JAL-1 / JCM 10045 / NBRC 100440) (Methanococcus jannaschii)).